The chain runs to 700 residues: Chaperonin CPN60, mitochondrial (700 aa).

Residues 1-9 (MRMKRIHIL) constitute a mitochondrion transit peptide. The interval 636 to 700 (TYKHKLHDDE…SMNDEYNYDE (65 aa)) is disordered. Residues 644 to 700 (DEDTDEDDEEDEDDEDDEDDLDDDDYDDEDEEDEEDEEDEDDEDDEDSMNDEYNYDE) show a composition bias toward acidic residues.

The protein belongs to the chaperonin (HSP60) family.

Its subcellular location is the mitochondrion matrix. Implicated in mitochondrial protein import and macromolecular assembly. May facilitate the correct folding of imported proteins. May also prevent misfolding and promote the refolding and proper assembly of unfolded polypeptides generated under stress conditions in the mitochondrial matrix. This chain is Chaperonin CPN60, mitochondrial, found in Plasmodium falciparum (isolate FCR-3 / Gambia).